We begin with the raw amino-acid sequence, 383 residues long: N-acetyldiaminopimelate deacetylase (383 aa).

Asp-72 is an active-site residue. Glu-131 acts as the Proton acceptor in catalysis.

The protein belongs to the peptidase M20A family. N-acetyldiaminopimelate deacetylase subfamily.

The enzyme catalyses N-acetyl-(2S,6S)-2,6-diaminopimelate + H2O = (2S,6S)-2,6-diaminopimelate + acetate. Its pathway is amino-acid biosynthesis; L-lysine biosynthesis via DAP pathway; LL-2,6-diaminopimelate from (S)-tetrahydrodipicolinate (acetylase route): step 3/3. Functionally, catalyzes the conversion of N-acetyl-diaminopimelate to diaminopimelate and acetate. The chain is N-acetyldiaminopimelate deacetylase from Lacticaseibacillus paracasei (strain ATCC 334 / BCRC 17002 / CCUG 31169 / CIP 107868 / KCTC 3260 / NRRL B-441) (Lactobacillus paracasei).